Consider the following 430-residue polypeptide: Resistance to inhibitors of cholinesterase protein 19 (430 aa).

Residues 56–260 (ASDNELDTCL…TSRAFETLAE (205 aa)) enclose the AH domain. The interval 279-342 (GTKPERERKS…SPLIEDVDDE (64 aa)) is disordered. Residues 281–294 (KPERERKSEKEESA) show a composition bias toward basic and acidic residues.

Interacts with the GTPase activator protein tbc-8; the interaction is direct and may be required for the activation of rab-2 and dense vesicle maturation in cholinergic motoneurons. Interacts with rund-1. Expressed in all neurons. Highly expressed in m2 pharyngeal neurons and some pharyngeal interneurons. Also expressed in the excretory canal and the gland cells located just below the nerve ring in the head.

The protein resides in the cytoplasm. It localises to the cytoplasmic vesicle membrane. In terms of biological role, may be involved in neurotransmitter secretion. In association with the GTPase activator protein tbc-8 activates rab-2 during dense core vesicle maturation in cholinergic motoneurons. This chain is Resistance to inhibitors of cholinesterase protein 19, found in Caenorhabditis elegans.